The chain runs to 108 residues: VQ motif-containing protein 10 (108 aa).

The short motif at 29 to 38 (FKTVVQELTG) is the VQ element. Positions 65-85 (IGEDTRQLHGGGGGGGRMGTT) are disordered. Positions 73 to 82 (HGGGGGGGRM) are enriched in gly residues.

As to quaternary structure, interacts with WRKY25, WRKY26 and WRKY33.

Its subcellular location is the nucleus. Its function is as follows. May modulate WRKY transcription factor activities. The polypeptide is VQ motif-containing protein 10 (Arabidopsis thaliana (Mouse-ear cress)).